The sequence spans 186 residues: NADH-dependent FMN reductase SfnF (186 aa).

The protein belongs to the SsuE family.

The enzyme catalyses FMNH2 + NAD(+) = FMN + NADH + 2 H(+). Its function is as follows. Involved in the dimethyl sulfide degradation pathway. Catalyzes the NADH-dependent reduction of FMN. The protein is NADH-dependent FMN reductase SfnF of Pseudomonas putida (Arthrobacter siderocapsulatus).